The primary structure comprises 128 residues: MVWSSNMSSFLLILLILNSTHFSLMANGRPEPDSVEFTKSGDQDVKMMMRGLIGSRPPRCERVRCRSCGHCEAIQVPTNPQTKLHSPLTTSSSSSSETIHLDYTRGDDSTNYKPMSWKCKCGNSIYNP.

Positions 1-28 (MVWSSNMSSFLLILLILNSTHFSLMANG) are cleaved as a signal peptide. 3 disulfide bridges follow: Cys-60/Cys-119, Cys-65/Cys-71, and Cys-68/Cys-121. Residues 79–90 (NPQTKLHSPLTT) show a composition bias toward polar residues. Residues 79–100 (NPQTKLHSPLTTSSSSSSETIH) form a disordered region.

Belongs to the plant cysteine rich small secretory peptide family. Epidermal patterning factor subfamily.

Its subcellular location is the secreted. Functionally, controls stomatal patterning. The polypeptide is EPIDERMAL PATTERNING FACTOR-like protein 2 (Arabidopsis thaliana (Mouse-ear cress)).